A 483-amino-acid polypeptide reads, in one-letter code: Glutamate--tRNA ligase (483 aa).

Residues 9 to 19 (PSPTGFLHIGN) carry the 'HIGH' region motif. A 'KMSKS' region motif is present at residues 253 to 257 (KLSKR). Position 256 (lysine 256) interacts with ATP.

This sequence belongs to the class-I aminoacyl-tRNA synthetase family. Glutamate--tRNA ligase type 1 subfamily. Monomer.

It is found in the cytoplasm. The enzyme catalyses tRNA(Glu) + L-glutamate + ATP = L-glutamyl-tRNA(Glu) + AMP + diphosphate. In terms of biological role, catalyzes the attachment of glutamate to tRNA(Glu) in a two-step reaction: glutamate is first activated by ATP to form Glu-AMP and then transferred to the acceptor end of tRNA(Glu). The polypeptide is Glutamate--tRNA ligase (Mycoplasma mycoides subsp. mycoides SC (strain CCUG 32753 / NCTC 10114 / PG1)).